Here is a 201-residue protein sequence, read N- to C-terminus: Small ribosomal subunit protein uS4c (201 aa).

Residues 17 to 44 (ALPGLTNKKPRTGSDLRNQSRSGKKSQY) are disordered. One can recognise an S4 RNA-binding domain in the interval 89-149 (MRLDNILFRL…DEQKSRALIQ (61 aa)).

Belongs to the universal ribosomal protein uS4 family. As to quaternary structure, part of the 30S ribosomal subunit. Contacts protein S5. The interaction surface between S4 and S5 is involved in control of translational fidelity.

Its subcellular location is the plastid. It is found in the chloroplast. In terms of biological role, one of the primary rRNA binding proteins, it binds directly to 16S rRNA where it nucleates assembly of the body of the 30S subunit. Functionally, with S5 and S12 plays an important role in translational accuracy. In Atropa belladonna (Belladonna), this protein is Small ribosomal subunit protein uS4c (rps4).